The chain runs to 274 residues: MAVRRALIVLAHAERTSFNYAMKEAAVEALKKKGWEVVESDLYAMNFNPLISRNDITGEPKDSENFQYPVESSLAYKEGRLSPDIVAEQKKLEAADLVIFQFPLYWFGVPAILKGWFERVLVAGFAYTYATMYDKGPFQNKKTLLSITTGGSGSMYSLQGVHGDMNVILWPIQSGILRFCGFQVLEPQLVYSIGHTPPDARVQVLEGWKKRLETVWEESPLYFAPSSLFDLNFQAGFLLKKEVQEEQKKNKFGLSVGHHLGKSIPADNQIKARK.

A2 is subject to N-acetylalanine. Residues H12, 18-19, and Q67 contribute to the FAD site; that span reads FN. S82 carries the phosphoserine modification. 104–107 contacts FAD; sequence LYWF. A substrate-binding site is contributed by 126–128; sequence AYT. FAD is bound by residues 148-151, Y156, and R201; that span reads TTGG. The tract at residues 225-274 is important for apoenzyme conformational stability; it reads PSSLFDLNFQAGFLLKKEVQEEQKKNKFGLSVGHHLGKSIPADNQIKARK. Residue K251 forms a Glycyl lysine isopeptide (Lys-Gly) (interchain with G-Cter in SUMO2) linkage.

This sequence belongs to the NAD(P)H dehydrogenase (quinone) family. As to quaternary structure, homodimer. Interacts with PDLIM4 isoform 2; this interaction stabilizes PDLIM4 isoform 2 in response to oxidative stress and protects it from ubiquitin-independent degradation by the core 20S proteasome. Interacts with TP73 (via SAM domain); this interaction is NADH-dependent, stabilizes TP73 in response to oxidative stress and protects it from ubiquitin-independent degradation by the 20S proteasome. Interacts with TP53; this interaction is NADH-dependent, stabilizes TP53 in response to oxidative stress and protects it from ubiquitin-independent degradation by the 20S proteasome. Requires FAD as cofactor.

It localises to the cytoplasm. The protein resides in the cytosol. The enzyme catalyses a quinone + NADH + H(+) = a quinol + NAD(+). It carries out the reaction a quinone + NADPH + H(+) = a quinol + NADP(+). The catalysed reaction is ubiquinone-10 + NADH + H(+) = ubiquinol-10 + NAD(+). It catalyses the reaction menadione + NADH + H(+) = menadiol + NAD(+). Its function is as follows. Flavin-containing quinone reductase that catalyzes two-electron reduction of quinones to hydroquinones using either NADH or NADPH as electron donors. In a ping-pong kinetic mechanism, the electrons are sequentially transferred from NAD(P)H to flavin cofactor and then from reduced flavin to the quinone, bypassing the formation of semiquinone and reactive oxygen species. Regulates cellular redox state primarily through quinone detoxification. Reduces components of plasma membrane redox system such as coenzyme Q and vitamin quinones, producing antioxidant hydroquinone forms. In the process may function as superoxide scavenger to prevent hydroquinone oxidation and facilitate excretion. Alternatively, can activate quinones and their derivatives by generating redox reactive hydroquinones with DNA cross-linking antitumor potential. Acts as a gatekeeper of the core 20S proteasome known to degrade proteins with unstructured regions. Upon oxidative stress, interacts with tumor suppressors TP53 and TP73 in a NADH-dependent way and inhibits their ubiquitin-independent degradation by the 20S proteasome. In Rattus norvegicus (Rat), this protein is NAD(P)H dehydrogenase [quinone] 1 (Nqo1).